We begin with the raw amino-acid sequence, 201 residues long: Increased recombination centers protein 21 (201 aa).

Residues 122 to 200 (PLRINRKIVK…LQVCFIGVVC (79 aa)) form the Cytochrome b5 heme-binding domain. Residues His-158 and His-182 each contribute to the heme site.

This sequence belongs to the cytochrome b5 family.

Involved in resistance to carboplatin and cisplatin. Is probably involved in a pathway contributing to genomic integrity. The chain is Increased recombination centers protein 21 (IRC21) from Saccharomyces cerevisiae (strain ATCC 204508 / S288c) (Baker's yeast).